The chain runs to 311 residues: Malate dehydrogenase (311 aa).

NAD(+) is bound by residues 7-12 (GAGNVG) and Asp-32. Substrate-binding residues include Arg-82 and Arg-88. Residues Asn-95 and 118–120 (VSN) each bind NAD(+). Residues Asn-120 and Arg-151 each contribute to the substrate site. The active-site Proton acceptor is His-175.

It belongs to the LDH/MDH superfamily. MDH type 3 family.

It carries out the reaction (S)-malate + NAD(+) = oxaloacetate + NADH + H(+). In terms of biological role, catalyzes the reversible oxidation of malate to oxaloacetate. The polypeptide is Malate dehydrogenase (Flavobacterium johnsoniae (strain ATCC 17061 / DSM 2064 / JCM 8514 / BCRC 14874 / CCUG 350202 / NBRC 14942 / NCIMB 11054 / UW101) (Cytophaga johnsonae)).